The following is a 1622-amino-acid chain: WD repeat-containing protein 97 (1622 aa).

WD repeat units follow at residues 187–233 (SEQG…RRLV), 290–329 (LHKT…RMVF), 331–370 (GHTG…QVGE), 552–592 (ELRC…TVFQ), 594–633 (EAHS…EESL), and 687–726 (DPTD…LRLL). Disordered stretches follow at residues 1090 to 1112 (GEKP…EDEE) and 1453 to 1472 (LHPA…EETD). Residues 1094–1118 (GEEGEEDKKEEEEEKEDEELDWALA) are a coiled coil. A compositionally biased stretch (acidic residues) spans 1096–1112 (EGEEDKKEEEEEKEDEE).

This Homo sapiens (Human) protein is WD repeat-containing protein 97.